Here is a 206-residue protein sequence, read N- to C-terminus: dITP/XTP pyrophosphatase (206 aa).

7–12 (SNNAKK) is a substrate binding site. Residue Asp-72 is the Proton acceptor of the active site. Asp-72 contributes to the Mg(2+) binding site. Substrate-binding positions include Ser-73, 155-158 (FGYD), Lys-182, and 187-188 (HR).

This sequence belongs to the HAM1 NTPase family. As to quaternary structure, homodimer. Mg(2+) is required as a cofactor.

The catalysed reaction is XTP + H2O = XMP + diphosphate + H(+). It catalyses the reaction dITP + H2O = dIMP + diphosphate + H(+). It carries out the reaction ITP + H2O = IMP + diphosphate + H(+). In terms of biological role, pyrophosphatase that catalyzes the hydrolysis of nucleoside triphosphates to their monophosphate derivatives, with a high preference for the non-canonical purine nucleotides XTP (xanthosine triphosphate), dITP (deoxyinosine triphosphate) and ITP. Seems to function as a house-cleaning enzyme that removes non-canonical purine nucleotides from the nucleotide pool, thus preventing their incorporation into DNA/RNA and avoiding chromosomal lesions. In Corynebacterium glutamicum (strain R), this protein is dITP/XTP pyrophosphatase.